The primary structure comprises 1037 residues: MDMDVMMISMCILASTFMAPGWASTSGFLRVPQSQSIVENEAADFGCEATDSASYLHYEWLHNGREIAYDKRVYRIGSHLHIEAVQREEDVGDYVCIATSLASGAREASPPAKLSVIYLESASVQLLGSNRNELLLKCHVEGASGDEPLQIEWYRDSARLASWGNVHLEEHRLLVRQPSPSDDGLYRCTASNAAGRVMSKQGYVYQANIKCLPRLLKKNQKLPESWGKQTFLCRGKRGGSGGLDQALSPAPEDLRIVQGPAGQLLIKEGDSAALSCLYELPAELQNQRIQLRWRKDGKLLRHVELGGALPIPGHAHDSGKDALLREDARLVLHKQNGTLSFASIIASDAGQYQCQLQLEGHAPLNSSPGLLEVIEQLKFVPQPTSKNLELDAAVAKVHCKAQGTPSPQVQWLREGSLNSSLPDQVEVDINGTLIFRNVRAEHRGNYTCQASSSQGQISATVSINVVVTPKFSVPPVGPIETTEQGSVVMHCQAIGDPKPTIQWDKDLKYLSENNTDRERFSFLENGTLEIRNVQVEDEGSYGCTIGNSAGLKREDVQLVVRSTGDGFAPEETGGDGFLVTRAVLITMTVALAYIVLVVGLMLWCRYRRQARKARLNELSIKEAGGDQPDASVTNGKGSEQEPCLSKQRNGASGKPKSKSNGDAQKSDDTACSQQSRSSKKSVYEQLVLPRSGLSELLQIGRGEFGDVFVGKLKASLVATSAQSDKDADTEKQHSNSENGSGGSGSGSGSGSTTLSTLNEKRRSKTSMDDIEEIKEEEPEQSALEQLVLVKALNKVKDEQACQEFRRQLDLLRGISHKGVVRLFGLCREKDPHYMVLEYTDWGDLKQFLLATAGKVNTATATSSPPALTTSQVLAVAYQIARGMDAIYRSRCTHRDLATRNCVISSEFVVKVSYPALCKDKYSREYHKHRNTLLPVRWLAPECIQEDEYTTKSDIFAYGVLVWELFNQATKLPHEELTSEQVIQRSQAGTLEWTVAEATPDSLKEILLSCWLANPKERPSFSQLGSALSKAMQSVAEK.

Residues Met-1–Ala-23 form the signal peptide. Ig-like C2-type domains follow at residues Ser-24–Ser-109, Pro-110–Ser-199, Pro-251–Asn-365, Pro-368–Asn-464, and Pro-469–Val-559. The Extracellular portion of the chain corresponds to Ser-24–Ala-582. 5 disulfide bridges follow: Cys-47–Cys-96, Cys-138–Cys-188, Cys-276–Cys-354, Cys-399–Cys-448, and Cys-491–Cys-543. Residues Asn-336, Asn-418, Asn-430, Asn-445, Asn-513, and Asn-525 are each glycosylated (N-linked (GlcNAc...) asparagine). A helical transmembrane segment spans residues Val-583 to Trp-603. At Cys-604–Lys-1037 the chain is on the cytoplasmic side. 2 disordered regions span residues Ala-623–Tyr-683 and Ser-720–Glu-777. Over residues Lys-658–Arg-676 the composition is skewed to polar residues. A Phosphoserine modification is found at Ser-681. Residues Leu-693 to Met-1031 form the Protein kinase; inactive domain. A compositionally biased stretch (basic and acidic residues) spans Ser-723–Ser-734. A compositionally biased stretch (gly residues) spans Gly-739–Ser-749. Acidic residues predominate over residues Asp-768 to Glu-777.

The protein belongs to the protein kinase superfamily. Tyr protein kinase family. Insulin receptor subfamily. Interacts with plexA; component of a receptor complex that mediates the repulsive signaling in response to Semaphorin ligands.

It localises to the cell membrane. Functionally, acts as a calcium-dependent, homophilic cell adhesion molecule that regulates neural recognition during the development of the nervous system. Component of the repulsive Plexin signaling response to regulate motor axon guidance at the embryonic stage. Also component of a receptor complex that is required in the adult visual system to innervate the lamina layer; specific targeting of R1-R6 axons. This chain is Tyrosine-protein kinase-like otk, found in Drosophila pseudoobscura pseudoobscura (Fruit fly).